The sequence spans 247 residues: Probable transcriptional regulatory protein lpl1249 (247 aa).

The protein belongs to the TACO1 family.

It is found in the cytoplasm. The protein is Probable transcriptional regulatory protein lpl1249 of Legionella pneumophila (strain Lens).